The sequence spans 262 residues: Hydroxyethylthiazole kinase (262 aa).

M50 is a binding site for substrate. ATP contacts are provided by R125 and T171. G198 is a substrate binding site.

It belongs to the Thz kinase family. Mg(2+) is required as a cofactor.

It catalyses the reaction 5-(2-hydroxyethyl)-4-methylthiazole + ATP = 4-methyl-5-(2-phosphooxyethyl)-thiazole + ADP + H(+). The protein operates within cofactor biosynthesis; thiamine diphosphate biosynthesis; 4-methyl-5-(2-phosphoethyl)-thiazole from 5-(2-hydroxyethyl)-4-methylthiazole: step 1/1. In terms of biological role, catalyzes the phosphorylation of the hydroxyl group of 4-methyl-5-beta-hydroxyethylthiazole (THZ). This chain is Hydroxyethylthiazole kinase, found in Escherichia coli O6:K15:H31 (strain 536 / UPEC).